Reading from the N-terminus, the 122-residue chain is Acidic phospholipase A2 5 (122 aa).

7 disulfide bridges follow: cysteine 26-cysteine 115, cysteine 28-cysteine 44, cysteine 43-cysteine 95, cysteine 49-cysteine 122, cysteine 50-cysteine 88, cysteine 57-cysteine 81, and cysteine 75-cysteine 86. Ca(2+) contacts are provided by phenylalanine 27, glycine 29, and glycine 31. The active site involves histidine 47. Aspartate 48 is a Ca(2+) binding site. Aspartate 89 is a catalytic residue.

The protein belongs to the phospholipase A2 family. Group II subfamily. D49 sub-subfamily. In terms of assembly, monomer (predominant). Non-covalently linked homodimers are also observed. It depends on Ca(2+) as a cofactor. Expressed by the venom gland.

Its subcellular location is the secreted. It carries out the reaction a 1,2-diacyl-sn-glycero-3-phosphocholine + H2O = a 1-acyl-sn-glycero-3-phosphocholine + a fatty acid + H(+). With respect to regulation, preincubation with heparin slightly increase the enzymatic activity. Its function is as follows. Snake venom phospholipase A2 (PLA2) that inhibits platelet aggregation induced by ADP, arachidonic acid and PAF. Acts in a enzymatic independent manner on a proteinase-activated receptor (PAR1, F2R) to evoke calcium release through the inositol 1,4,5-trisphosphate receptor (ITPR1, IP3R) and induces mouse aorta contraction. PAR1, phospholipase C and IP3R inhibitors suppress PA2-induced aorta contraction. PLA2 catalyzes the calcium-dependent hydrolysis of the 2-acyl groups in 3-sn-phosphoglycerides. In Trimeresurus stejnegeri (Chinese green tree viper), this protein is Acidic phospholipase A2 5.